The chain runs to 752 residues: Peptidyl-prolyl cis-trans isomerase G (752 aa).

The region spanning 11–176 (FFDIAINNQP…AEVRILSCGE (166 aa)) is the PPIase cyclophilin-type domain. Residues 182-193 (KVKKEEKKRHKS) are compositionally biased toward basic residues. The disordered stretch occupies residues 182–752 (KVKKEEKKRH…SPGTDEDKSG (571 aa)). Positions 194–214 (SSSSSSSDSDSSSDSQSSSES) are enriched in low complexity. Basic residues predominate over residues 226 to 251 (RKRKKKHRKNSRKHKKEKKKRKKSKK). Ser252, Ser254, Ser255, Ser257, and Ser288 each carry phosphoserine. Residues 290-308 (PKADDKERKNREREREREC) are compositionally biased toward basic and acidic residues. Residue Ser313 is modified to Phosphoserine. The span at 327–345 (SGRKIKGRGPRRYRTPSRS) shows a compositional bias: basic residues. Composition is skewed to basic and acidic residues over residues 346-366 (RSRD…EMQR) and 377-447 (RWIK…DKYN). Ser354 carries the post-translational modification Phosphoserine. Thr356 is modified (phosphothreonine). Ser384 carries the post-translational modification Phosphoserine. Lys390 participates in a covalent cross-link: Glycyl lysine isopeptide (Lys-Gly) (interchain with G-Cter in SUMO2). Residues Ser395, Ser411, and Ser413 each carry the phosphoserine modification. Positions 448–461 (KNKVKKRGKSKSRS) are enriched in basic residues. Composition is skewed to basic and acidic residues over residues 462-552 (KSKE…DLTK) and 577-598 (RSHD…QEYR). Residues 599–625 (RRGRSRSRDRRTPGRSRSKDRRRRRRD) are compositionally biased toward basic residues. Residues 626 to 684 (SRSSEREESQSRNKDKYRSQESKSSHRKENSEGEKRTYSKSRDHNSSSNNREKKADREQ) are compositionally biased toward basic and acidic residues. A phosphoserine mark is found at Ser685 and Ser688. Over residues 685 to 705 (SPVSKTKQSSQDNEVKSSTLK) the composition is skewed to polar residues. A Glycyl lysine isopeptide (Lys-Gly) (interchain with G-Cter in SUMO2) cross-link involves residue Lys691. Phosphoserine is present on residues Ser694, Ser742, and Ser743. Residues 706–752 (NQEDEKTRSPVEKENQKSKGQENDHVHDKNKKCDHESSPGTDEDKSG) are compositionally biased toward basic and acidic residues. Thr746 carries the post-translational modification Phosphothreonine. At Ser751 the chain carries Phosphoserine.

In terms of assembly, interacts with CLK1, PNN and with the phosphorylated C-terminal domain of RNA polymerase II.

The protein localises to the nucleus matrix. It localises to the nucleus speckle. It carries out the reaction [protein]-peptidylproline (omega=180) = [protein]-peptidylproline (omega=0). Its activity is regulated as follows. Inhibited by cyclosporin A (CsA). In terms of biological role, PPIase that catalyzes the cis-trans isomerization of proline imidic peptide bonds in oligopeptides and may therefore assist protein folding. May be implicated in the folding, transport, and assembly of proteins. May play an important role in the regulation of pre-mRNA splicing. This chain is Peptidyl-prolyl cis-trans isomerase G (Ppig), found in Mus musculus (Mouse).